Reading from the N-terminus, the 269-residue chain is Kafirin PGK1 (269 aa).

Positions 1–21 (MATKIFALLALHALLVSGTTA) are cleaved as a signal peptide.

The protein belongs to the zein family.

Functionally, major seed storage prolamin. This chain is Kafirin PGK1, found in Sorghum bicolor (Sorghum).